Reading from the N-terminus, the 257-residue chain is Triosephosphate isomerase, cytosolic (257 aa).

Residues Asn-10 and Lys-12 each coordinate substrate. Catalysis depends on His-96, which acts as the Electrophile. The active-site Proton acceptor is Glu-167.

This sequence belongs to the triosephosphate isomerase family. Homodimer. In terms of tissue distribution, higher levels found in leaves than in roots.

It localises to the cytoplasm. The catalysed reaction is D-glyceraldehyde 3-phosphate = dihydroxyacetone phosphate. The protein operates within carbohydrate biosynthesis; gluconeogenesis. Its pathway is carbohydrate degradation; glycolysis; D-glyceraldehyde 3-phosphate from glycerone phosphate: step 1/1. The sequence is that of Triosephosphate isomerase, cytosolic (TPI) from Stellaria longipes (Longstalk starwort).